Reading from the N-terminus, the 814-residue chain is DNA gyrase subunit A (814 aa).

The Topo IIA-type catalytic domain maps to 32–499 (LPDVRDGLKP…GVIEFREEDL (468 aa)). Residue Tyr-120 is the O-(5'-phospho-DNA)-tyrosine intermediate of the active site. The GyrA-box signature appears at 526 to 532 (QHRAGRG).

The protein belongs to the type II topoisomerase GyrA/ParC subunit family. As to quaternary structure, heterotetramer, composed of two GyrA and two GyrB chains. In the heterotetramer, GyrA contains the active site tyrosine that forms a transient covalent intermediate with DNA, while GyrB binds cofactors and catalyzes ATP hydrolysis.

It is found in the cytoplasm. The catalysed reaction is ATP-dependent breakage, passage and rejoining of double-stranded DNA.. Functionally, a type II topoisomerase that negatively supercoils closed circular double-stranded (ds) DNA in an ATP-dependent manner to modulate DNA topology and maintain chromosomes in an underwound state. Negative supercoiling favors strand separation, and DNA replication, transcription, recombination and repair, all of which involve strand separation. Also able to catalyze the interconversion of other topological isomers of dsDNA rings, including catenanes and knotted rings. Type II topoisomerases break and join 2 DNA strands simultaneously in an ATP-dependent manner. The protein is DNA gyrase subunit A of Dehalogenimonas lykanthroporepellens (strain ATCC BAA-1523 / JCM 15061 / BL-DC-9).